Consider the following 259-residue polypeptide: Aliphatic sulfonates import ATP-binding protein SsuB 2 (259 aa).

An ABC transporter domain is found at 17–238; the sequence is LDILGLWKGF…VRSSQAFTSI (222 aa). An ATP-binding site is contributed by 49–56; sequence GRSGCGKS.

It belongs to the ABC transporter superfamily. Aliphatic sulfonates importer (TC 3.A.1.17.2) family. The complex is composed of two ATP-binding proteins (SsuB), two transmembrane proteins (SsuC) and a solute-binding protein (SsuA).

Its subcellular location is the cell inner membrane. The catalysed reaction is ATP + H2O + aliphatic sulfonate-[sulfonate-binding protein]Side 1 = ADP + phosphate + aliphatic sulfonateSide 2 + [sulfonate-binding protein]Side 1.. Its function is as follows. Part of the ABC transporter complex SsuABC involved in aliphatic sulfonates import. Responsible for energy coupling to the transport system. The polypeptide is Aliphatic sulfonates import ATP-binding protein SsuB 2 (Agrobacterium fabrum (strain C58 / ATCC 33970) (Agrobacterium tumefaciens (strain C58))).